Here is a 523-residue protein sequence, read N- to C-terminus: Probable glucose-1-phosphate adenylyltransferase large subunit, chloroplastic (523 aa).

It belongs to the bacterial/plant glucose-1-phosphate adenylyltransferase family. In terms of assembly, heterotetramer.

It localises to the plastid. Its subcellular location is the chloroplast. The catalysed reaction is alpha-D-glucose 1-phosphate + ATP + H(+) = ADP-alpha-D-glucose + diphosphate. It functions in the pathway glycan biosynthesis; starch biosynthesis. Activated by 3'phosphoglycerate, inhibited by orthophosphate. Allosteric regulation. Functionally, this protein plays a role in synthesis of starch. It catalyzes the synthesis of the activated glycosyl donor, ADP-glucose from Glc-1-P and ATP. This Arabidopsis thaliana (Mouse-ear cress) protein is Probable glucose-1-phosphate adenylyltransferase large subunit, chloroplastic.